The chain runs to 526 residues: Triacylglycerol lipase OBL1 (526 aa).

Residues 79–99 (GHLTDFLLNFYYQNHGFLGIL) traverse the membrane as a helical segment. A GXSXG motif is present at residues 338–342 (GHSLG). S340 functions as the Nucleophile in the catalytic mechanism. Residues D404 and H497 each act as charge relay system in the active site.

Belongs to the AB hydrolase superfamily. Lipase family.

It localises to the membrane. It carries out the reaction a triacylglycerol + H2O = a diacylglycerol + a fatty acid + H(+). Acid lipase that can hydrolyze a range of triacylglycerols but is not active on phospholipids. In vitro, hydrolyzes triolein, trilinolein, triricinolein, tripalmitin, trilaurin and tricaprin. May play a role in the regulation of lipolysis in germinating seeds. In Ricinus communis (Castor bean), this protein is Triacylglycerol lipase OBL1.